The primary structure comprises 152 residues: UPF0178 protein KPK_4355 (152 aa).

Belongs to the UPF0178 family.

The chain is UPF0178 protein KPK_4355 from Klebsiella pneumoniae (strain 342).